The chain runs to 415 residues: Corticotropin-releasing factor receptor 1 (415 aa).

Positions 1–24 (MLLAKTPCLLLVQVIAAGISFALT) are cleaved as a signal peptide. Topologically, residues 25–111 (SLQDQCETLQ…CQEILKQEKK (87 aa)) are extracellular. 3 cysteine pairs are disulfide-bonded: Cys30-Cys54, Cys44-Cys87, and Cys68-Cys102. Asn38, Asn45, Asn78, and Asn90 each carry an N-linked (GlcNAc...) asparagine glycan. Residues 112 to 142 (TKVHYHIAIVINFLGHSISLCALLVAFILFL) form a helical membrane-spanning segment. Residues 143-149 (RLRSIRC) lie on the Cytoplasmic side of the membrane. Residues 150–174 (LRNIIHWNLITAFILRNVTWFVMQL) form a helical membrane-spanning segment. Topologically, residues 175–189 (TLSHEAHDSNVVWCR) are extracellular. Cys188 and Cys258 are oxidised to a cystine. Residues 190 to 218 (LVTIAHNYFYVTNFFWMFGEGCYLHTAIV) traverse the membrane as a helical segment. The Cytoplasmic portion of the chain corresponds to 219-225 (LTYSTDK). The helical transmembrane segment at 226–253 (LRKWMFICIGWCIPFPIIVAWAIGKLYY) threads the bilayer. Residues 254–269 (DNEKCWFGKKAGVYTD) are Extracellular-facing. A helical transmembrane segment spans residues 270–295 (FIYQGPVILVLLINFIFLFNIVRILM). The Cytoplasmic portion of the chain corresponds to 296–306 (TKLRASTTSET). A helical membrane pass occupies residues 307-331 (IQYRKAVKATLVLLPLLGITYMLFF). Residues 332-338 (VTPGEDE) are Extracellular-facing. Residues 339–368 (ISRIVFIYFNSFLQSFQGFFVSVFYCFLNS) form a helical membrane-spanning segment. Residues 369–415 (EVRSAVRKRWHRWQDKHSIRARVARAMSIPTSPTRISFHSIKQSSAI) lie on the Cytoplasmic side of the membrane.

The protein belongs to the G-protein coupled receptor 2 family. Interacts (via N-terminal extracellular domain) with CRF and UCN.

The protein localises to the cell membrane. In terms of biological role, G-protein coupled receptor for CRH (corticotropin-releasing factor) and UCN (urocortin). Has high affinity for CRH and UCN. Ligand binding causes a conformation change that triggers signaling via guanine nucleotide-binding proteins (G proteins) and down-stream effectors, such as adenylate cyclase. Promotes the activation of adenylate cyclase, leading to increased intracellular cAMP levels. The chain is Corticotropin-releasing factor receptor 1 (crhr1) from Xenopus laevis (African clawed frog).